Reading from the N-terminus, the 303-residue chain is Golgi to ER traffic protein 2 (303 aa).

Over 1–168 (MSEQPLSQDE…NAYNIYQQRL (168 aa)) the chain is Cytoplasmic. The segment at 19-86 (RQAKMARGKA…DPEDDPDLMD (68 aa)) is disordered. Positions 31 to 48 (RLNNILSQGSSVKGTTDP) are enriched in polar residues. A helical membrane pass occupies residues 169-189 (WKFRFSIIRFAAVLTNFFYHY). The Lumenal portion of the chain corresponds to 190–216 (LTIQDYSFTSSPHFYVRALAPHPAVNS). Residues 217–236 (FITWFSTCEVAILASFYLIT) form a helical membrane-spanning segment. Residues 237–280 (SKNNIYANASDGNLLLKGISMGAMVLPQLRAYQPLVIRLAHYWE) are Cytoplasmic-facing. The helical transmembrane segment at 281–301 (VFSMLLGDIFLVVVLFGLVSI) threads the bilayer. Residues 302–303 (YN) are Lumenal-facing.

It belongs to the GET2 family. As to quaternary structure, component of the Golgi to ER traffic (GET) complex, which is composed of GET1, GET2 and GET3. Within the complex, GET1 and GET2 form a heterotetramer which is stabilized by phosphatidylinositol binding and which binds to the GET3 homodimer.

The protein localises to the endoplasmic reticulum membrane. It localises to the golgi apparatus membrane. Its function is as follows. Required for the post-translational delivery of tail-anchored (TA) proteins to the endoplasmic reticulum. Together with GET1, acts as a membrane receptor for soluble GET3, which recognizes and selectively binds the transmembrane domain of TA proteins in the cytosol. The GET complex cooperates with the HDEL receptor ERD2 to mediate the ATP-dependent retrieval of resident ER proteins that contain a C-terminal H-D-E-L retention signal from the Golgi to the ER. This Debaryomyces hansenii (strain ATCC 36239 / CBS 767 / BCRC 21394 / JCM 1990 / NBRC 0083 / IGC 2968) (Yeast) protein is Golgi to ER traffic protein 2.